Consider the following 3623-residue polypeptide: Cubilin (3623 aa).

The signal sequence occupies residues methionine 1 to glycine 23. A propeptide spans glutamate 24 to arginine 35 (removed in mature form). Residues proline 42–glycine 49 form an interaction with AMN region. A glycan (N-linked (GlcNAc...) asparagine) is linked at asparagine 105. Residues aspartate 132–serine 168 enclose the EGF-like 1 domain. 9 disulfides stabilise this stretch: cysteine 136–cysteine 147, cysteine 141–cysteine 156, cysteine 158–cysteine 167, cysteine 174–cysteine 190, cysteine 184–cysteine 199, cysteine 201–cysteine 210, cysteine 267–cysteine 280, cysteine 274–cysteine 289, and cysteine 292–cysteine 303. The EGF-like 2; calcium-binding domain maps to aspartate 170 to alanine 211. The EGF-like 3; calcium-binding domain maps to aspartate 263 to glutamate 304. An EGF-like 4; calcium-binding domain is found at aspartate 305 to threonine 348. EGF-like domains follow at residues leucine 349–asparagine 385 and leucine 395–threonine 430. Intrachain disulfides connect cysteine 353-cysteine 366, cysteine 360-cysteine 376, cysteine 399-cysteine 409, cysteine 404-cysteine 418, cysteine 420-cysteine 429, cysteine 436-cysteine 447, cysteine 441-cysteine 456, cysteine 458-cysteine 467, cysteine 474-cysteine 500, cysteine 527-cysteine 549, cysteine 590-cysteine 616, cysteine 643-cysteine 665, and cysteine 708-cysteine 734. The N-linked (GlcNAc...) asparagine glycan is linked to asparagine 428. The EGF-like 7; calcium-binding domain maps to asparagine 432–glutamine 468. 27 CUB domains span residues cysteine 474 to glutamine 586, cysteine 590 to serine 702, cysteine 708 to alanine 816, alanine 816 to glutamate 928, cysteine 932 to isoleucine 1042, cysteine 1048 to serine 1161, cysteine 1165 to threonine 1277, cysteine 1278 to tyrosine 1389, cysteine 1391 to valine 1506, cysteine 1510 to alanine 1619, cysteine 1620 to serine 1734, cysteine 1738 to isoleucine 1850, glycine 1852 to valine 1963, cysteine 1978 to serine 2091, cysteine 2092 to lysine 2213, cysteine 2217 to alanine 2334, cysteine 2336 to serine 2448, cysteine 2452 to serine 2565, cysteine 2570 to threonine 2687, cysteine 2689 to glutamine 2801, cysteine 2805 to arginine 2919, cysteine 2920 to isoleucine 3035, cysteine 3037 to threonine 3150, cysteine 3157 to methionine 3274, cysteine 3278 to alanine 3393, cysteine 3395 to serine 3507, and cysteine 3511 to serine 3623. Asparagine 482 carries N-linked (GlcNAc...) asparagine glycosylation. 4 N-linked (GlcNAc...) asparagine glycosylation sites follow: asparagine 711, asparagine 749, asparagine 781, and asparagine 857. Cystine bridges form between cysteine 869–cysteine 891 and cysteine 932–cysteine 958. Asparagine 957 is a glycosylation site (N-linked (GlcNAc...) asparagine). Glutamate 980 is a binding site for Ca(2+). A glycan (N-linked (GlcNAc...) asparagine) is linked at asparagine 984. An intrachain disulfide couples cysteine 985 to cysteine 1005. Positions 988, 1027, 1029, and 1030 each coordinate Ca(2+). Residues cysteine 1048 and cysteine 1074 are joined by a disulfide bond. Asparagine 1092 carries an N-linked (GlcNAc...) asparagine glycan. Positions 1096, 1105, 1146, 1148, and 1149 each coordinate Ca(2+). Cysteine 1165 and cysteine 1191 form a disulfide bridge. An N-linked (GlcNAc...) asparagine glycan is attached at asparagine 1168. Glutamate 1213 serves as a coordination point for Ca(2+). N-linked (GlcNAc...) asparagine glycosylation occurs at asparagine 1217. Residues cysteine 1218 and cysteine 1240 are joined by a disulfide bond. Aspartate 1221, aspartate 1262, glycine 1264, and glutamine 1265 together coordinate Ca(2+). Cysteine 1278 and cysteine 1306 are oxidised to a cystine. 3 N-linked (GlcNAc...) asparagine glycosylation sites follow: asparagine 1285, asparagine 1307, and asparagine 1319. Glutamate 1328 serves as a coordination point for Ca(2+). Asparagine 1332 is a glycosylation site (N-linked (GlcNAc...) asparagine). A disulfide bridge connects residues cysteine 1333 and cysteine 1351. Positions 1336, 1373, and 1375 each coordinate Ca(2+). Intrachain disulfides connect cysteine 1391-cysteine 1417 and cysteine 1444-cysteine 1466. The N-linked (GlcNAc...) asparagine glycan is linked to asparagine 1500. Cysteine 1510 and cysteine 1536 are joined by a disulfide. Asparagine 1551 carries N-linked (GlcNAc...) asparagine glycosylation. 5 disulfides stabilise this stretch: cysteine 1563–cysteine 1581, cysteine 1620–cysteine 1647, cysteine 1675–cysteine 1697, cysteine 1738–cysteine 1764, and cysteine 1791–cysteine 1812. Asparagine 1646 carries an N-linked (GlcNAc...) asparagine glycan. 3 N-linked (GlcNAc...) asparagine glycosylation sites follow: asparagine 1802, asparagine 1819, and asparagine 1885. Intrachain disulfides connect cysteine 1905–cysteine 1927, cysteine 1978–cysteine 2006, and cysteine 2032–cysteine 2054. Asparagine 2085 and asparagine 2117 each carry an N-linked (GlcNAc...) asparagine glycan. 2 disulfides stabilise this stretch: cysteine 2092–cysteine 2118 and cysteine 2217–cysteine 2247. Residue asparagine 2274 is glycosylated (N-linked (GlcNAc...) asparagine). 2 disulfide bridges follow: cysteine 2275–cysteine 2297 and cysteine 2336–cysteine 2363. Asparagine 2386 and asparagine 2400 each carry an N-linked (GlcNAc...) asparagine glycan. 3 disulfide bridges follow: cysteine 2390/cysteine 2411, cysteine 2452/cysteine 2478, and cysteine 2505/cysteine 2527. Residues asparagine 2531, asparagine 2581, asparagine 2592, and asparagine 2610 are each glycosylated (N-linked (GlcNAc...) asparagine). A disulfide bond links cysteine 2570 and cysteine 2599. 7 cysteine pairs are disulfide-bonded: cysteine 2628-cysteine 2649, cysteine 2689-cysteine 2715, cysteine 2742-cysteine 2764, cysteine 2805-cysteine 2831, cysteine 2860-cysteine 2883, cysteine 2920-cysteine 2946, and cysteine 2977-cysteine 2999. N-linked (GlcNAc...) asparagine glycosylation is present at asparagine 2813. N-linked (GlcNAc...) asparagine glycosylation is found at asparagine 2923 and asparagine 2945. Phosphothreonine is present on threonine 3008. Intrachain disulfides connect cysteine 3037–cysteine 3064 and cysteine 3091–cysteine 3113. N-linked (GlcNAc...) asparagine glycans are attached at residues asparagine 3042, asparagine 3103, asparagine 3125, and asparagine 3165. 2 disulfide bridges follow: cysteine 3157/cysteine 3185 and cysteine 3215/cysteine 3237. Residues asparagine 3268, asparagine 3283, asparagine 3290, and asparagine 3295 are each glycosylated (N-linked (GlcNAc...) asparagine). Disulfide bonds link cysteine 3278/cysteine 3306 and cysteine 3332/cysteine 3354. Asparagine 3357 carries N-linked (GlcNAc...) asparagine glycosylation. Cysteines 3395 and 3421 form a disulfide. 4 N-linked (GlcNAc...) asparagine glycosylation sites follow: asparagine 3430, asparagine 3457, asparagine 3533, and asparagine 3576. 3 cysteine pairs are disulfide-bonded: cysteine 3448/cysteine 3470, cysteine 3511/cysteine 3537, and cysteine 3564/cysteine 3586.

Interacts with AMN. Component of the cubam complex composed of one CUBN trimer and one AMN chain. The cubam complex can dimerize. Interacts with LRP2 in a dual-receptor complex in a calcium-dependent manner. Found in a complex with PID1/PCLI1, LRP1 and CUBNI. Interacts with LRP1 and PID1/PCLI1. The precursor is cleaved by a trans-Golgi proteinase furin, removing a propeptide. In terms of processing, N-glycosylated. In terms of tissue distribution, detected in kidney cortex (at protein level). Expressed in kidney proximal tubule cells, placenta, visceral yolk-sac cells and in absorptive intestinal cells. Expressed in the epithelium of intestine and kidney.

It is found in the apical cell membrane. It localises to the cell membrane. The protein resides in the membrane. Its subcellular location is the coated pit. The protein localises to the endosome. It is found in the lysosome membrane. Functionally, endocytic receptor which plays a role in lipoprotein, vitamin and iron metabolism by facilitating their uptake. Acts together with LRP2 to mediate endocytosis of high-density lipoproteins, GC, hemoglobin, ALB, TF and SCGB1A1. Acts together with AMN to mediate endocytosis of the CBLIF-cobalamin complex. Binds to ALB, MB, Kappa and lambda-light chains, TF, hemoglobin, GC, SCGB1A1, APOA1, high density lipoprotein, and the CBLIF-cobalamin complex. Ligand binding requires calcium. Serves as important transporter in several absorptive epithelia, including intestine, renal proximal tubules and embryonic yolk sac. May play an important role in the development of the peri-implantation embryo through internalization of APOA1 and cholesterol. Binds to LGALS3 at the maternal-fetal interface. This Homo sapiens (Human) protein is Cubilin (CUBN).